The sequence spans 397 residues: Odorant receptor 85a (397 aa).

At 1–46 (MIFKYIQEPVLGSLFRSRDSLIYLNRSIDQMGWRLPPRTKPYWWLY) the chain is on the cytoplasmic side. Residues 47 to 67 (YIWTLVVIVLVFIFIPYGLIM) form a helical membrane-spanning segment. Residues 68-83 (TGIKEFKNFTTTDLFT) lie on the Extracellular side of the membrane. A glycan (N-linked (GlcNAc...) asparagine) is linked at Asn-75. Residues 84-104 (YVQVPVNTNASIMKGIIVLFM) form a helical membrane-spanning segment. The Cytoplasmic portion of the chain corresponds to 105–142 (RRRFSRAQKMMDAMDIRCTKMEEKVQVHRAAALCNRVV). Residues 143 to 163 (VIYHCIYFGYLSMALTGALVI) form a helical membrane-spanning segment. Over 164-192 (GKTPFCLYNPLVNPDDHFYLATAIESVTM) the chain is Extracellular. The helical transmembrane segment at 193–213 (AGIILANLILDVYPIIYVVVL) threads the bilayer. Residues 214–262 (RIHMELLSERIKTLRTDVEKGDDQHYAELVECVKDHKLIVEYGNTLRPM) are Cytoplasmic-facing. The chain crosses the membrane as a helical span at residues 263–283 (ISATMFIQLLSVGLLLGLAAV). Residues 284–294 (SMQFYNTVMER) lie on the Extracellular side of the membrane. The chain crosses the membrane as a helical span at residues 295-315 (VVSGVYTIAILSQTFPFCYVC). Residues 316–347 (EQLSSDCESLTNTLFHSKWIGAERRYRTTMLY) lie on the Cytoplasmic side of the membrane. Residues 348 to 368 (FIHNVQQSILFTAGGIFPICL) form a helical membrane-spanning segment. Topologically, residues 369–397 (NTNIKMAKFAFSVVTIVNEMDLAEKLRRE) are extracellular.

This sequence belongs to the insect chemoreceptor superfamily. Heteromeric odorant receptor channel (TC 1.A.69) family. Or2a subfamily. In terms of assembly, interacts with Orco. Complexes exist early in the endomembrane system in olfactory sensory neurons (OSNs), coupling these complexes to the conserved ciliary trafficking pathway. As to expression, expressed in olfactory sensory neurons in the antenna.

It is found in the cell membrane. Functionally, odorant receptor which mediates acceptance or avoidance behavior, depending on its substrates. The odorant receptor repertoire encodes a large collection of odor stimuli that vary widely in identity, intensity, and duration. May form a complex with Orco to form odorant-sensing units, providing sensitive and prolonged odorant signaling and calcium permeability. The chain is Odorant receptor 85a (Or85a) from Drosophila melanogaster (Fruit fly).